A 125-amino-acid polypeptide reads, in one-letter code: Small ribosomal subunit protein uS11 (125 aa).

The protein belongs to the universal ribosomal protein uS11 family. As to quaternary structure, part of the 30S ribosomal subunit. Interacts with proteins S7 and S18. Binds to IF-3.

In terms of biological role, located on the platform of the 30S subunit, it bridges several disparate RNA helices of the 16S rRNA. Forms part of the Shine-Dalgarno cleft in the 70S ribosome. In Coprothermobacter proteolyticus (strain ATCC 35245 / DSM 5265 / OCM 4 / BT), this protein is Small ribosomal subunit protein uS11.